The sequence spans 548 residues: Peptide chain release factor 3 (548 aa).

The region spanning 23–290 (ERRRTFGIIS…ALLDWAPPPQ (268 aa)) is the tr-type G domain. Residues 32–39 (SHPDAGKT), 100–104 (DTPGH), and 154–157 (NKMD) contribute to the GTP site.

The protein belongs to the TRAFAC class translation factor GTPase superfamily. Classic translation factor GTPase family. PrfC subfamily.

It localises to the cytoplasm. Functionally, increases the formation of ribosomal termination complexes and stimulates activities of RF-1 and RF-2. It binds guanine nucleotides and has strong preference for UGA stop codons. It may interact directly with the ribosome. The stimulation of RF-1 and RF-2 is significantly reduced by GTP and GDP, but not by GMP. The sequence is that of Peptide chain release factor 3 from Aromatoleum aromaticum (strain DSM 19018 / LMG 30748 / EbN1) (Azoarcus sp. (strain EbN1)).